The chain runs to 376 residues: Phytanoyl-CoA hydroxylase-interacting protein-like (376 aa).

Phosphoserine occurs at positions 12 and 15. Asparagine 23 is a glycosylation site (N-linked (GlcNAc...) asparagine). Residue serine 25 is modified to Phosphoserine. N-linked (GlcNAc...) asparagine glycosylation occurs at asparagine 37. In terms of domain architecture, Fibronectin type-III spans 52-161 (VPHNIKISNI…EIIEFCTADY (110 aa)).

This sequence belongs to the PHYHIP family.

In terms of biological role, may play a role in the development of the central system. The protein is Phytanoyl-CoA hydroxylase-interacting protein-like (PHYHIPL) of Homo sapiens (Human).